Here is a 240-residue protein sequence, read N- to C-terminus: Phosphoribosylaminoimidazole-succinocarboxamide synthase (240 aa).

This sequence belongs to the SAICAR synthetase family.

It catalyses the reaction 5-amino-1-(5-phospho-D-ribosyl)imidazole-4-carboxylate + L-aspartate + ATP = (2S)-2-[5-amino-1-(5-phospho-beta-D-ribosyl)imidazole-4-carboxamido]succinate + ADP + phosphate + 2 H(+). The protein operates within purine metabolism; IMP biosynthesis via de novo pathway; 5-amino-1-(5-phospho-D-ribosyl)imidazole-4-carboxamide from 5-amino-1-(5-phospho-D-ribosyl)imidazole-4-carboxylate: step 1/2. The chain is Phosphoribosylaminoimidazole-succinocarboxamide synthase from Acidithiobacillus ferrooxidans (strain ATCC 23270 / DSM 14882 / CIP 104768 / NCIMB 8455) (Ferrobacillus ferrooxidans (strain ATCC 23270)).